We begin with the raw amino-acid sequence, 206 residues long: Large ribosomal subunit protein uL4 (206 aa).

Residues 42 to 54 (RRQQGTHQSQGRS) are compositionally biased toward polar residues. The interval 42–93 (RRQQGTHQSQGRSDVSRTGAKMFKQKGTGRARHSSARAPQFRGGGKAHGPVV) is disordered. Basic residues predominate over residues 64–76 (FKQKGTGRARHSS).

This sequence belongs to the universal ribosomal protein uL4 family. Part of the 50S ribosomal subunit.

Its function is as follows. One of the primary rRNA binding proteins, this protein initially binds near the 5'-end of the 23S rRNA. It is important during the early stages of 50S assembly. It makes multiple contacts with different domains of the 23S rRNA in the assembled 50S subunit and ribosome. Forms part of the polypeptide exit tunnel. This Bartonella henselae (strain ATCC 49882 / DSM 28221 / CCUG 30454 / Houston 1) (Rochalimaea henselae) protein is Large ribosomal subunit protein uL4.